Here is a 122-residue protein sequence, read N- to C-terminus: Large ribosomal subunit protein uL14 (122 aa).

This sequence belongs to the universal ribosomal protein uL14 family. In terms of assembly, part of the 50S ribosomal subunit. Forms a cluster with proteins L3 and L19. In the 70S ribosome, L14 and L19 interact and together make contacts with the 16S rRNA in bridges B5 and B8.

Its function is as follows. Binds to 23S rRNA. Forms part of two intersubunit bridges in the 70S ribosome. The chain is Large ribosomal subunit protein uL14 from Rickettsia africae (strain ESF-5).